The primary structure comprises 439 residues: Putrescine transporter PotE (439 aa).

12 consecutive transmembrane segments (helical) span residues 10 to 30 (GVVQ…IIML), 40 to 60 (ISII…WAFA), 91 to 111 (TYGV…VGYG), 114 to 134 (LLGA…VLWI), 152 to 172 (ITVW…WFWF), 186 to 206 (APFF…FLGL), 225 to 245 (IAVL…TNVI), 276 to 296 (VIMA…QFTI), 321 to 341 (APVQ…LMTI), 354 to 374 (NLAV…LVII), 387 to 407 (VANF…YSSG), and 410 to 430 (AMLY…LVSP).

This sequence belongs to the amino acid-polyamine-organocation (APC) superfamily. Basic amino acid/polyamine antiporter (APA) (TC 2.A.3.2) family.

The protein localises to the cell inner membrane. It catalyses the reaction putrescine(in) + H(+)(in) = putrescine(out) + H(+)(out). It carries out the reaction putrescine(in) + L-ornithine(out) = putrescine(out) + L-ornithine(in). Catalyzes both the uptake and excretion of putrescine. The uptake of putrescine is dependent on the membrane potential and the excretion involves putrescine-ornithine antiporter activity. This is Putrescine transporter PotE from Escherichia coli O6:H1 (strain CFT073 / ATCC 700928 / UPEC).